We begin with the raw amino-acid sequence, 108 residues long: Guanine nucleotide-binding protein subunit gamma (108 aa).

Residue Cys-104 is the site of S-palmitoyl cysteine attachment. Residue Cys-105 is modified to Cysteine methyl ester. Residue Cys-105 is the site of S-farnesyl cysteine attachment. The propeptide at 106-108 is removed in mature form; sequence VIS.

This sequence belongs to the G protein gamma family. G proteins are composed of 3 units, alpha, beta and gamma.

The protein resides in the membrane. The polypeptide is Guanine nucleotide-binding protein subunit gamma (Yarrowia lipolytica (strain CLIB 122 / E 150) (Yeast)).